We begin with the raw amino-acid sequence, 704 residues long: Elongation factor G (704 aa).

The 283-residue stretch at 8–290 (ARYRNIGISA…AVIDYLPSPV (283 aa)) folds into the tr-type G domain. GTP is bound by residues 17 to 24 (AHIDAGKT), 88 to 92 (DTPGH), and 142 to 145 (NKMD). 2 positions are modified to N6-acetyllysine: K504 and K643.

Belongs to the TRAFAC class translation factor GTPase superfamily. Classic translation factor GTPase family. EF-G/EF-2 subfamily.

The protein resides in the cytoplasm. Its function is as follows. Catalyzes the GTP-dependent ribosomal translocation step during translation elongation. During this step, the ribosome changes from the pre-translocational (PRE) to the post-translocational (POST) state as the newly formed A-site-bound peptidyl-tRNA and P-site-bound deacylated tRNA move to the P and E sites, respectively. Catalyzes the coordinated movement of the two tRNA molecules, the mRNA and conformational changes in the ribosome. This chain is Elongation factor G, found in Shigella sonnei (strain Ss046).